We begin with the raw amino-acid sequence, 319 residues long: Fructokinase (319 aa).

Belongs to the carbohydrate kinase PfkB family. Expressed in swelling stolons and, at higher levels, in developing tubers. Low levels found in leaves and stems from tuberizing plants.

It catalyses the reaction D-fructose + ATP = D-fructose 6-phosphate + ADP + H(+). It functions in the pathway glycan biosynthesis; starch biosynthesis. Functionally, may play an important role in maintaining the flux of carbon towards starch formation. The sequence is that of Fructokinase from Solanum tuberosum (Potato).